We begin with the raw amino-acid sequence, 407 residues long: Bifunctional enzyme IspD/IspF (407 aa).

The 2-C-methyl-D-erythritol 4-phosphate cytidylyltransferase stretch occupies residues 1-246 (MQPLAEATTI…RQDHVSFPDI (246 aa)). Residues 247 to 407 (RTGNGYDVHS…TVIYPGEVPE (161 aa)) form a 2-C-methyl-D-erythritol 2,4-cyclodiphosphate synthase region. The a divalent metal cation site is built by D253 and H255. 4-CDP-2-C-methyl-D-erythritol 2-phosphate contacts are provided by residues 253 to 255 (DVH) and 279 to 280 (HS). H287 is an a divalent metal cation binding site. 4-CDP-2-C-methyl-D-erythritol 2-phosphate is bound by residues 301 to 303 (DIG), 377 to 380 (TTNE), F384, and R387.

In the N-terminal section; belongs to the IspD/TarI cytidylyltransferase family. IspD subfamily. It in the C-terminal section; belongs to the IspF family. It depends on a divalent metal cation as a cofactor.

It carries out the reaction 2-C-methyl-D-erythritol 4-phosphate + CTP + H(+) = 4-CDP-2-C-methyl-D-erythritol + diphosphate. The catalysed reaction is 4-CDP-2-C-methyl-D-erythritol 2-phosphate = 2-C-methyl-D-erythritol 2,4-cyclic diphosphate + CMP. Its pathway is isoprenoid biosynthesis; isopentenyl diphosphate biosynthesis via DXP pathway; isopentenyl diphosphate from 1-deoxy-D-xylulose 5-phosphate: step 2/6. It participates in isoprenoid biosynthesis; isopentenyl diphosphate biosynthesis via DXP pathway; isopentenyl diphosphate from 1-deoxy-D-xylulose 5-phosphate: step 4/6. In terms of biological role, bifunctional enzyme that catalyzes the formation of 4-diphosphocytidyl-2-C-methyl-D-erythritol from CTP and 2-C-methyl-D-erythritol 4-phosphate (MEP) (IspD), and catalyzes the conversion of 4-diphosphocytidyl-2-C-methyl-D-erythritol 2-phosphate (CDP-ME2P) to 2-C-methyl-D-erythritol 2,4-cyclodiphosphate (ME-CPP) with a corresponding release of cytidine 5-monophosphate (CMP) (IspF). In Brucella anthropi (strain ATCC 49188 / DSM 6882 / CCUG 24695 / JCM 21032 / LMG 3331 / NBRC 15819 / NCTC 12168 / Alc 37) (Ochrobactrum anthropi), this protein is Bifunctional enzyme IspD/IspF.